The primary structure comprises 527 residues: Putative BTB/POZ domain and WD-repeat protein R783 (527 aa).

The 71-residue stretch at 45-115 (TDVTIVLDDG…FYSQNTDTRN (71 aa)) folds into the BTB domain. WD repeat units follow at residues 215–266 (IHGD…VEAS), 272–310 (NVKT…LIKT), 313–353 (KHKN…IVRC), 355–391 (ISPV…FLFK), and 436–476 (YCPS…DNKY).

It belongs to the mimivirus BTB/WD family.

This chain is Putative BTB/POZ domain and WD-repeat protein R783, found in Acanthamoeba polyphaga (Amoeba).